We begin with the raw amino-acid sequence, 546 residues long: High-affinity glucose transporter ght5 (546 aa).

Over 1–9 (MGKNLTIVM) the chain is Cytoplasmic. A helical membrane pass occupies residues 10 to 30 (LVFVSMAGWMFGADTGSIGGI). At 31-58 (TNMRDFQSRFADRYNPVTDSYSYSSARQ) the chain is on the extracellular side. Residues 59–79 (GLITGMVNVGSFFGCFLSSPL) traverse the membrane as a helical segment. Residues 80–87 (MDRIGKRT) are Cytoplasmic-facing. Residues 88–108 (SIMFWTIVYLIGIILQVTAVP) traverse the membrane as a helical segment. Over 109–112 (SWVQ) the chain is Extracellular. The chain crosses the membrane as a helical span at residues 113–133 (IMVAKIWTGLSIGALSVLAPG). Topologically, residues 134–144 (FQSEVAPADLR) are cytoplasmic. A helical transmembrane segment spans residues 145–165 (GTIVTTYQLAVTGGIFIAACI). Residues 166 to 179 (NMGTHKLHKTAQWR) are Extracellular-facing. Residues 180–200 (VSMGINLLWGIITFIGISFLP) traverse the membrane as a helical segment. Topologically, residues 201 to 266 (ESPRYLISVG…IFGPDIRYRT (66 aa)) are cytoplasmic. Residues 267–285 (FLGLGVMSLQQLTGDNYYF) traverse the membrane as a helical segment. Residues 286 to 301 (YYGFEVFEGTGMNSPY) lie on the Extracellular side of the membrane. Residues 302–322 (LSALILDAVNFGCTFGGLFVL) form a helical membrane-spanning segment. The Cytoplasmic segment spans residues 323–328 (EFFGRR). A helical membrane pass occupies residues 329 to 349 (MPLIIGALWQSITFFIYAAVG). At 350–363 (NRALTRKNGTSNHR) the chain is on the extracellular side. A glycan (N-linked (GlcNAc...) asparagine) is linked at Asn-357. A helical transmembrane segment spans residues 364–384 (AGAVMIVFSCLFIFSFAQTWG). Residues 385–404 (PAAYVIVGESYPIRYRSKCA) are Cytoplasmic-facing. A helical transmembrane segment spans residues 405 to 425 (AVATTGNWLWGFLISFFTPFI). At 426-432 (TNSIGFK) the chain is on the extracellular side. A helical membrane pass occupies residues 433-453 (YGYIFAACNLCAACIIFLFAH). Residues 454–546 (ETKGLTLEEI…SYHDQEEQFA (93 aa)) are Cytoplasmic-facing. Residues 486–546 (KQQEEVREKS…SYHDQEEQFA (61 aa)) are disordered. The segment covering 487-496 (QQEEVREKSR) has biased composition (basic and acidic residues). Over residues 509 to 519 (VDGEEGIEDSS) the composition is skewed to acidic residues. Residues 520–529 (NDISSTTSSD) show a composition bias toward low complexity. Residues Ser-528 and Ser-537 each carry the phosphoserine modification. The segment covering 530–546 (GRAKPESSYHDQEEQFA) has biased composition (basic and acidic residues).

This sequence belongs to the major facilitator superfamily. Sugar transporter (TC 2.A.1.1) family.

The protein resides in the membrane. In terms of biological role, high-affinity glucose transporter. The polypeptide is High-affinity glucose transporter ght5 (ght5) (Schizosaccharomyces pombe (strain 972 / ATCC 24843) (Fission yeast)).